We begin with the raw amino-acid sequence, 332 residues long: Solute carrier family 25 member 16 (332 aa).

Solcar repeat units lie at residues 34–120, 128–216, and 238–328; these read FYWL…YKTL, SGHV…LKSV, and LKTH…MKQF. 6 helical membrane passes run 37–57, 88–108, 134–154, 191–211, 244–264, and 299–319; these read LRSFLAGGIAGCCAKTTVAPL, GFLGLYKGNGAMMIRIFPYGA, LMAGSMAGMTAVICTYPLDMV, GLMPTILGMAPYAGVSFFTFG, LLCGGVAGAIAQTISYPFDVT, and GLYRGLSLNYIRCIPSQAVAF.

Belongs to the mitochondrial carrier (TC 2.A.29) family.

Its subcellular location is the mitochondrion inner membrane. In terms of biological role, may be involved in the transport of coenzyme A in the mitochondrial matrix. Very little is known about the physiological function of this carrier. The polypeptide is Solute carrier family 25 member 16 (Homo sapiens (Human)).